The following is a 339-amino-acid chain: Isopentenyl-diphosphate delta-isomerase (339 aa).

7–8 contacts substrate; that stretch reads RK. FMN contacts are provided by residues Ser-65, 66-68, Ser-96, and Asn-125; that span reads SMT. 96–98 contributes to the substrate binding site; it reads SQR. A substrate-binding site is contributed by Gln-160. Glu-161 is a Mg(2+) binding site. Residues Lys-192, Thr-222, and 293–294 contribute to the FMN site; that span reads AG.

It belongs to the IPP isomerase type 2 family. As to quaternary structure, homooctamer. Dimer of tetramers. FMN serves as cofactor. Requires NADPH as cofactor. It depends on Mg(2+) as a cofactor.

The protein localises to the cytoplasm. It carries out the reaction isopentenyl diphosphate = dimethylallyl diphosphate. Its function is as follows. Involved in the biosynthesis of isoprenoids. Catalyzes the 1,3-allylic rearrangement of the homoallylic substrate isopentenyl (IPP) to its allylic isomer, dimethylallyl diphosphate (DMAPP). This Vibrio campbellii (strain ATCC BAA-1116) protein is Isopentenyl-diphosphate delta-isomerase.